We begin with the raw amino-acid sequence, 163 residues long: 6,7-dimethyl-8-ribityllumazine synthase (163 aa).

Residues F22, 56 to 58, and 80 to 82 each bind 5-amino-6-(D-ribitylamino)uracil; these read TFE and AVI. 85-86 contributes to the (2S)-2-hydroxy-3-oxobutyl phosphate binding site; the sequence is GT. H88 (proton donor) is an active-site residue. Residue M113 coordinates 5-amino-6-(D-ribitylamino)uracil. R127 contacts (2S)-2-hydroxy-3-oxobutyl phosphate.

The protein belongs to the DMRL synthase family.

The catalysed reaction is (2S)-2-hydroxy-3-oxobutyl phosphate + 5-amino-6-(D-ribitylamino)uracil = 6,7-dimethyl-8-(1-D-ribityl)lumazine + phosphate + 2 H2O + H(+). It participates in cofactor biosynthesis; riboflavin biosynthesis; riboflavin from 2-hydroxy-3-oxobutyl phosphate and 5-amino-6-(D-ribitylamino)uracil: step 1/2. Its function is as follows. Catalyzes the formation of 6,7-dimethyl-8-ribityllumazine by condensation of 5-amino-6-(D-ribitylamino)uracil with 3,4-dihydroxy-2-butanone 4-phosphate. This is the penultimate step in the biosynthesis of riboflavin. This is 6,7-dimethyl-8-ribityllumazine synthase from Anaeromyxobacter sp. (strain Fw109-5).